We begin with the raw amino-acid sequence, 122 residues long: Large ribosomal subunit protein uL14 (122 aa).

It belongs to the universal ribosomal protein uL14 family. In terms of assembly, part of the 50S ribosomal subunit. Forms a cluster with proteins L3 and L19. In the 70S ribosome, L14 and L19 interact and together make contacts with the 16S rRNA in bridges B5 and B8.

In terms of biological role, binds to 23S rRNA. Forms part of two intersubunit bridges in the 70S ribosome. The polypeptide is Large ribosomal subunit protein uL14 (Teredinibacter turnerae (strain ATCC 39867 / T7901)).